We begin with the raw amino-acid sequence, 307 residues long: Dof zinc finger protein DOF5.4 (307 aa).

The Dof-type zinc finger occupies 51–105 (LKCPRCNSLNTKFCYYNNYNLSQPRHFCKNCRRYWTKGGVLRNVPVGGGCRKAKR). Zn(2+) contacts are provided by Cys-53, Cys-56, Cys-78, and Cys-81. The segment at 96–147 (VGGGCRKAKRSKTKQVPSSSSADKPTTTQDDHHVEEKSSTGSHSSSESSSLT) is disordered. Polar residues predominate over residues 109-123 (KQVPSSSSADKPTTT). Basic and acidic residues predominate over residues 124 to 133 (QDDHHVEEKS). Residues 134 to 147 (STGSHSSSESSSLT) show a composition bias toward low complexity.

It is found in the nucleus. Functionally, transcription factor that binds specifically to a 5'-AA[AG]G-3' consensus core sequence. Enhances the DNA binding of OBF transcription factors to OCS elements. In Arabidopsis thaliana (Mouse-ear cress), this protein is Dof zinc finger protein DOF5.4 (DOF5.4).